Consider the following 242-residue polypeptide: DNA repair protein RecO (242 aa).

Belongs to the RecO family.

Its function is as follows. Involved in DNA repair and RecF pathway recombination. The polypeptide is DNA repair protein RecO (Bacteroides fragilis (strain ATCC 25285 / DSM 2151 / CCUG 4856 / JCM 11019 / LMG 10263 / NCTC 9343 / Onslow / VPI 2553 / EN-2)).